We begin with the raw amino-acid sequence, 387 residues long: Succinate--CoA ligase [ADP-forming] subunit beta (387 aa).

Residues Lys46, 53 to 55 (GRG), Glu99, Ala102, and Glu107 contribute to the ATP site. Residues Asn199 and Asp213 each contribute to the Mg(2+) site. Residues Asn264 and 321 to 323 (GIV) each bind substrate.

This sequence belongs to the succinate/malate CoA ligase beta subunit family. As to quaternary structure, heterotetramer of two alpha and two beta subunits. Mg(2+) serves as cofactor.

It carries out the reaction succinate + ATP + CoA = succinyl-CoA + ADP + phosphate. The enzyme catalyses GTP + succinate + CoA = succinyl-CoA + GDP + phosphate. It participates in carbohydrate metabolism; tricarboxylic acid cycle; succinate from succinyl-CoA (ligase route): step 1/1. Succinyl-CoA synthetase functions in the citric acid cycle (TCA), coupling the hydrolysis of succinyl-CoA to the synthesis of either ATP or GTP and thus represents the only step of substrate-level phosphorylation in the TCA. The beta subunit provides nucleotide specificity of the enzyme and binds the substrate succinate, while the binding sites for coenzyme A and phosphate are found in the alpha subunit. The sequence is that of Succinate--CoA ligase [ADP-forming] subunit beta from Campylobacter jejuni subsp. doylei (strain ATCC BAA-1458 / RM4099 / 269.97).